Reading from the N-terminus, the 382-residue chain is MRRNVALLFGGRSAEHEVSIVSAGNVARALDPDRYAVTPIAIDKETGAWRLCPPLAPGEAPAMVREGPRVAFLPGGGGRLAVLGETASVSEPFDVVVPVLHGPNGEDGTVQGALDLAGVPYVGSGVIGSAAAMDKDVAKRLMRDAGLPIVPYLVAGPRRGVAYTEAVEALESRTLFVKPANMGSSVGVSRVADAGQFDQALAHAFAYDEKILIERAVPRAREIEFAVLETAEGEVRVSPPGEIAPAAAHGFYGYDAKYVDPDGAALLIPASLAPALAERMGGLAARAFEALACAGLARVDLFLDPDDPEGIFVNEVNTLPGFTAISMYPKLWDAAGLAPPALMDALIAHALARHARAVATGRAAPRSAADAAWAPMRESISR.

The region spanning 139 to 348 is the ATP-grasp domain; the sequence is KRLMRDAGLP…PPALMDALIA (210 aa). 168–223 lines the ATP pocket; that stretch reads EALESRTLFVKPANMGSSVGVSRVADAGQFDQALAHAFAYDEKILIERAVPRAREI. The Mg(2+) site is built by Asp-300, Glu-315, and Asn-317.

This sequence belongs to the D-alanine--D-alanine ligase family. Mg(2+) serves as cofactor. Mn(2+) is required as a cofactor.

It localises to the cytoplasm. The catalysed reaction is 2 D-alanine + ATP = D-alanyl-D-alanine + ADP + phosphate + H(+). It participates in cell wall biogenesis; peptidoglycan biosynthesis. In terms of biological role, cell wall formation. The chain is D-alanine--D-alanine ligase from Methylobacterium sp. (strain 4-46).